Here is a 258-residue protein sequence, read N- to C-terminus: Acetylglutamate kinase (258 aa).

Substrate-binding positions include 44–45 (GG), R66, and N158. ATP is bound by residues 181 to 186 (DVSGIL) and 209 to 211 (IIT).

The protein belongs to the acetylglutamate kinase family. ArgB subfamily. In terms of assembly, homodimer.

The protein localises to the cytoplasm. It carries out the reaction N-acetyl-L-glutamate + ATP = N-acetyl-L-glutamyl 5-phosphate + ADP. It functions in the pathway amino-acid biosynthesis; L-arginine biosynthesis; N(2)-acetyl-L-ornithine from L-glutamate: step 2/4. In terms of biological role, catalyzes the ATP-dependent phosphorylation of N-acetyl-L-glutamate. This chain is Acetylglutamate kinase, found in Escherichia coli O157:H7.